The sequence spans 290 residues: ATP synthase gamma chain (290 aa).

The protein belongs to the ATPase gamma chain family. In terms of assembly, F-type ATPases have 2 components, CF(1) - the catalytic core - and CF(0) - the membrane proton channel. CF(1) has five subunits: alpha(3), beta(3), gamma(1), delta(1), epsilon(1). CF(0) has three main subunits: a, b and c.

Its subcellular location is the cell inner membrane. Functionally, produces ATP from ADP in the presence of a proton gradient across the membrane. The gamma chain is believed to be important in regulating ATPase activity and the flow of protons through the CF(0) complex. In Desulfotalea psychrophila (strain LSv54 / DSM 12343), this protein is ATP synthase gamma chain.